Here is a 239-residue protein sequence, read N- to C-terminus: LexA repressor (239 aa).

A DNA-binding region (H-T-H motif) is located at residues 26–46 (FDEMKDALDLASKSGIHRLIT). A disordered region spans residues 84 to 107 (SPSVIEGSLGKPQPVATPAPAKSV). Residues Ser159 and Lys197 each act as for autocatalytic cleavage activity in the active site.

It belongs to the peptidase S24 family. In terms of assembly, homodimer.

The enzyme catalyses Hydrolysis of Ala-|-Gly bond in repressor LexA.. In terms of biological role, represses a number of genes involved in the response to DNA damage (SOS response), including recA and lexA. In the presence of single-stranded DNA, RecA interacts with LexA causing an autocatalytic cleavage which disrupts the DNA-binding part of LexA, leading to derepression of the SOS regulon and eventually DNA repair. In Rhizobium johnstonii (strain DSM 114642 / LMG 32736 / 3841) (Rhizobium leguminosarum bv. viciae), this protein is LexA repressor.